A 384-amino-acid chain; its full sequence is D-galactosamine-6-phosphate deaminase AgaS (384 aa).

2 SIS domains span residues leucine 45–phenylalanine 197 and serine 215–proline 364.

This sequence belongs to the SIS family. AgaS subfamily.

It catalyses the reaction D-galactosamine 6-phosphate + H2O = D-tagatopyranose 1-phosphate + NH4(+). Its function is as follows. Catalyzes the isomerization-deamination of galactosamine 6-phosphate to form tagatofuranose 6-phosphate and ammonium ion. This is D-galactosamine-6-phosphate deaminase AgaS from Escherichia coli.